The following is a 59-amino-acid chain: Chromatin protein Cren7 (59 aa).

Belongs to the Cren7 family. Monomer. In terms of processing, methylated at multiple sites, to varying extents.

It localises to the chromosome. The protein resides in the cytoplasm. Functionally, a chromatin protein, binds double-stranded DNA without sequence specificity. Constrains negative DNA supercoils. This is Chromatin protein Cren7 from Sulfolobus acidocaldarius (strain ATCC 33909 / DSM 639 / JCM 8929 / NBRC 15157 / NCIMB 11770).